A 96-amino-acid chain; its full sequence is MLKPLGDRVVVRFDDEKEQTVGGFVLAGTHKESTRKATVLAVSETGVRTITGDSVLPSVSVGQEVLVENGHDLEVTVDDEKVSIIRESDIIAIVTK.

The protein belongs to the GroES chaperonin family. As to quaternary structure, heptamer of 7 subunits arranged in a ring. Interacts with the chaperonin GroEL.

The protein resides in the cytoplasm. Together with the chaperonin GroEL, plays an essential role in assisting protein folding. The GroEL-GroES system forms a nano-cage that allows encapsulation of the non-native substrate proteins and provides a physical environment optimized to promote and accelerate protein folding. GroES binds to the apical surface of the GroEL ring, thereby capping the opening of the GroEL channel. The protein is Co-chaperonin GroES of Streptococcus pyogenes serotype M18 (strain MGAS8232).